A 468-amino-acid polypeptide reads, in one-letter code: 6-phospho-beta-galactosidase (468 aa).

The D-galactose 6-phosphate site is built by glutamine 19, histidine 116, asparagine 159, glutamate 160, and asparagine 297. Residue glutamate 160 is the Proton donor of the active site. The active-site Nucleophile is glutamate 375. The D-galactose 6-phosphate site is built by serine 428, tryptophan 429, lysine 435, and tyrosine 437.

Belongs to the glycosyl hydrolase 1 family.

It catalyses the reaction a 6-phospho-beta-D-galactoside + H2O = D-galactose 6-phosphate + an alcohol. It participates in carbohydrate metabolism; lactose degradation; D-galactose 6-phosphate and beta-D-glucose from lactose 6-phosphate: step 1/1. The polypeptide is 6-phospho-beta-galactosidase (Streptococcus pyogenes serotype M3 (strain ATCC BAA-595 / MGAS315)).